The primary structure comprises 116 residues: Ribosome-binding factor A (116 aa).

Belongs to the RbfA family. Monomer. Binds 30S ribosomal subunits, but not 50S ribosomal subunits or 70S ribosomes.

Its subcellular location is the cytoplasm. Its function is as follows. One of several proteins that assist in the late maturation steps of the functional core of the 30S ribosomal subunit. Associates with free 30S ribosomal subunits (but not with 30S subunits that are part of 70S ribosomes or polysomes). Required for efficient processing of 16S rRNA. May interact with the 5'-terminal helix region of 16S rRNA. This Levilactobacillus brevis (strain ATCC 367 / BCRC 12310 / CIP 105137 / JCM 1170 / LMG 11437 / NCIMB 947 / NCTC 947) (Lactobacillus brevis) protein is Ribosome-binding factor A.